The primary structure comprises 537 residues: Cytochrome P450 CYP12A2 (537 aa).

Position 483 (cysteine 483) interacts with heme.

The protein belongs to the cytochrome P450 family. Heme is required as a cofactor.

The protein is Cytochrome P450 CYP12A2 (CYP12A2) of Musca domestica (House fly).